The chain runs to 465 residues: Gamma-aminobutyric acid receptor subunit rho-2 (465 aa).

Positions 1–20 (MPYLMRLALVLFCLMALVES) are cleaved as a signal peptide. The Extracellular segment spans residues 21–260 (RKPRRKRWTG…LYINFTLRRH (240 aa)). Arginine 105 is a 4-aminobutanoate binding site. N-linked (GlcNAc...) asparagine glycosylation occurs at asparagine 120. Serine 169 is a binding site for 4-aminobutanoate. Cysteine 178 and cysteine 192 form a disulfide bridge. A 4-aminobutanoate-binding site is contributed by glutamate 197. An N-linked (GlcNAc...) asparagine glycan is attached at asparagine 254. The chain crosses the membrane as a helical span at residues 261-281 (IFFFLLQTYFPATLMVMLSWV). Topologically, residues 282 to 293 (SFWIDHRAVPAR) are cytoplasmic. The helical transmembrane segment at 294–314 (VSLGIMTVLTMSTIITGVNAS) threads the bilayer. Residues 315-325 (MPRVSYIRAVD) lie on the Extracellular side of the membrane. Residues 326–346 (IYLWVSFVFVFLSVLEYAAVN) traverse the membrane as a helical segment. Over 347–443 (YLTTLQEQKE…IFQNTHAIDK (97 aa)) the chain is Cytoplasmic. A helical membrane pass occupies residues 444–464 (YSRLIFPAFYIVFNLIYWSVF). Serine 465 is a topological domain (extracellular).

This sequence belongs to the ligand-gated ion channel (TC 1.A.9) family. Gamma-aminobutyric acid receptor (TC 1.A.9.5) subfamily. GABRR2 sub-subfamily. Three rho subunits (rho-1/GBRR1, rho-2/GBRR2 and rho-3/GBRR3) coassemble either to form functional homopentamers or heteropentamers. Rho-2 is unable to form a functional homopentamer. Interacts with SQSTM1. As to expression, expressed in the cerebellum.

The protein resides in the postsynaptic cell membrane. It is found in the cell membrane. It carries out the reaction chloride(in) = chloride(out). Rho subunit of the pentameric ligand-gated chloride channels responsible for mediating the effects of gamma-aminobutyric acid (GABA), the major inhibitory neurotransmitter in the brain. Rho-containing GABA-gated chloride channels are a subclass of GABA(A) receptors (GABAARs) entirely composed of rho subunits, where GABA molecules bind at the rho intersubunit interfaces. When activated by GABA, rho-GABAARs selectively allow the flow of chloride anions across the cell membrane down their electrochemical gradient. Rho-2 GABAARs may contribute to the regulation of glial development in the cerebellum by controlling extrasynaptic transmission. Rho-2 GABAARs are also involved in neuronal tonic (extrasynaptic) and phasic (synaptic) transmission in the Purkinje neurons of the cerebellum. Rho-2 GABAARs expressed in retina may play a role in retinal neurotransmission. This chain is Gamma-aminobutyric acid receptor subunit rho-2, found in Mus musculus (Mouse).